We begin with the raw amino-acid sequence, 399 residues long: Proteinase-activated receptor 2 (399 aa).

Positions 1 to 25 (MRSLSLAWLLGGITLLAASVSCSRT) are cleaved as a signal peptide. Residues 26-38 (ENLAPGRNNSKGR) constitute a propeptide, removed for receptor activation. Asn-33 carries an N-linked (GlcNAc...) asparagine glycan. The Extracellular segment spans residues 39 to 73 (SLIGRLETQPPITGKGVPVEPGFSIDEFSASILTG). Residues 74–103 (KLTTVFLPVVYIIVFVIGLPSNGMALWIFL) traverse the membrane as a helical segment. Residues 104-110 (FRTKKKH) are Cytoplasmic-facing. A helical membrane pass occupies residues 111–139 (PAVIYMANLALADLLSVIWFPLKISYHLH). The Extracellular segment spans residues 140 to 151 (GNNWVYGEALCK). Cys-150 and Cys-228 form a disulfide bridge. Residues 152–179 (VLIGFFYGNMYCSILFMTCLSVQRYWVI) traverse the membrane as a helical segment. The Cytoplasmic segment spans residues 180–185 (VNPMGH). A helical membrane pass occupies residues 186–213 (PRKKANIAVGVSLAIWLLIFLVTIPLYV). Residues 214–237 (MKQTIYIPALNITTCHDVLPEEVL) are Extracellular-facing. Asn-224 carries N-linked (GlcNAc...) asparagine glycosylation. The chain crosses the membrane as a helical span at residues 238–271 (VGDMFNYFLSLAIGVFLFPALLTASAYVLMIKTL). At 272–279 (RSSAMDEH) the chain is on the cytoplasmic side. Residues 280 to 319 (SEKKRQRAIRLIITVLAMYFICFAPSNLLLVVHYFLIKTQ) traverse the membrane as a helical segment. The Extracellular segment spans residues 320-325 (RQSHVY). A helical transmembrane segment spans residues 326–349 (ALYLVALCLSTLNSCIDPFVYYFV). Topologically, residues 350–399 (SKDFRDHARNALLCRSVRTVNRMQISLSSNKFSRKSGSYSSSSTSVKTSY) are cytoplasmic. Residue Cys-363 is the site of S-palmitoyl cysteine attachment.

This sequence belongs to the G-protein coupled receptor 1 family. Interacts with TLR4, COPS5 and TMED2. Interacts with GNAQ, GNA11, GNA12, GNA13 and GNA14. A proteolytic cleavage generates a new N-terminus that functions as a tethered ligand. Activating serine proteases include trypsin, mast cell tryptase, coagulation factors VII and Xa, myeloblastin/PRTN3 and membrane-type serine protease 1/ST14. Proposed subsequent cleavage by serine proteases is leading to receptor deactivation and include neutrophil elastase and cathepsin G. At least in part, implicated proteases are also shown to activate the receptor; the glycosylation status of the receptor is thought to contribute to the difference. In terms of processing, N-glycosylated and sialylated. Post-translationally, multiple phosphorylated on serine and threonine residues in the cytoplasmic region upon receptor activation; required for receptor desensitization and recruitment of beta-arrestin. Monoubiquitinated by Cbl at the plasma membrane and in early endosomes; not required for receptor endocytosis but for translocation to late endosomes or lysosomes. Deubiquitination involves Stambp and Usp8; required for lysosomal trafficking and receptor degradation.

Its subcellular location is the cell membrane. In terms of biological role, receptor for trypsin and trypsin-like enzymes coupled to G proteins. Its function is mediated through the activation of several signaling pathways including phospholipase C (PLC), intracellular calcium, mitogen-activated protein kinase (MAPK), I-kappaB kinase/NF-kappaB and Rho. Can also be transactivated by cleaved F2r/Par1. Involved in modulation of inflammatory responses and regulation of innate and adaptive immunity, and acts as a sensor for proteolytic enzymes generated during infection. Generally is promoting inflammation. Can signal synergistically with Tlr4 and probably Tlr2 in inflammatory responses and modulates Tlr3 signaling. Has a protective role in establishing the endothelial barrier; the activity involves coagulation factor X. Regulates endothelial cell barrier integrity during neutrophil extravasation, probably following proteolytic cleavage by PRTN3. Proposed to have a bronchoprotective role in airway epithelium, but also shown to compromise the airway epithelial barrier by interrupting E-cadherin adhesion. Involved in the regulation of vascular tone; activation results in hypotension presumably mediated by vasodilation. Associates with a subset of G proteins alpha subunits such as GNAQ, GNA11, GNA14, GNA12 and GNA13, but probably not with G(o)-alpha, G(i) subunit alpha-1 and G(i) subunit alpha-2. Believed to be a class B receptor which internalizes as a complex with arrestin and traffic with it to endosomal vesicles, presumably as desensitized receptor, for extended periods of time. Mediates inhibition of TNF-alpha stimulated JNK phosphorylation via coupling to GNAQ and GNA11; the function involves dissociation of Ripk1 and Tradd from Tnfr1. Mediates phosphorylation of nuclear factor NF-kappa-B RELA subunit at 'Ser-536'; the function involves Ikbkb and is predominantly independent of G proteins. Involved in cellular migration. Involved in cytoskeletal rearrangement and chemotaxis through beta-arrestin-promoted scaffolds; the function is independent of GNAQ and GNA11 and involves promotion of cofilin dephosphorylation and actin filament severing. Induces redistribution of Cops5 from the plasma membrane to the cytosol and activation of the JNK cascade is mediated by Cops5. Involved in the recruitment of leukocytes to the sites of inflammation and is the major PAR receptor capable of modulating eosinophil function such as pro-inflammatory cytokine secretion, superoxide production and degranulation. During inflammation promotes dendritic cell maturation, trafficking to the lymph nodes and subsequent T-cell activation. Involved in antimicrobial response of innate immune cells; activation enhances phagocytosis of Gram-positive and killing of Gram-negative bacteria. Acts synergistically with interferon-gamma in enhancing antiviral responses. Mediates activation of pro-inflammatory and pro-fibrotic responses in fibroblasts, triggered by coagulation factor Xa (F10). Probably mediates activation of barrier protective signaling responses in endothelial cells, triggered by coagulation factor Xa (F10). The chain is Proteinase-activated receptor 2 (F2rl1) from Mus musculus (Mouse).